Reading from the N-terminus, the 642-residue chain is Threonine--tRNA ligase (642 aa).

The region spanning 1–61 is the TGS domain; it reads MPIITLPDGS…SEDANLEIIT (61 aa). Residues 243-534 form a catalytic region; that stretch reads DHRKIGKALN…ITEEYAGFFP (292 aa). Positions 334, 385, and 511 each coordinate Zn(2+).

Belongs to the class-II aminoacyl-tRNA synthetase family. In terms of assembly, homodimer. The cofactor is Zn(2+).

The protein resides in the cytoplasm. The catalysed reaction is tRNA(Thr) + L-threonine + ATP = L-threonyl-tRNA(Thr) + AMP + diphosphate + H(+). In terms of biological role, catalyzes the attachment of threonine to tRNA(Thr) in a two-step reaction: L-threonine is first activated by ATP to form Thr-AMP and then transferred to the acceptor end of tRNA(Thr). Also edits incorrectly charged L-seryl-tRNA(Thr). This Histophilus somni (strain 2336) (Haemophilus somnus) protein is Threonine--tRNA ligase.